Consider the following 239-residue polypeptide: UPF0126 membrane protein VC_2382 (239 aa).

6 helical membrane-spanning segments follow: residues 38-58, 62-82, 86-106, 122-142, 153-173, and 185-205; these read LLYL…VLLA, KMDP…GGTI, ALGA…VIMI, AWWI…GIGV, LIAI…RDVL, and VYAT…AMGY.

Belongs to the UPF0126 family.

It localises to the cell membrane. The chain is UPF0126 membrane protein VC_2382 from Vibrio cholerae serotype O1 (strain ATCC 39315 / El Tor Inaba N16961).